A 622-amino-acid polypeptide reads, in one-letter code: Membrane protein insertase YidC (622 aa).

Residues 8–28 traverse the membrane as a helical segment; the sequence is LFLALILSMGIWMGVNYFFFP. A compositionally biased stretch (basic and acidic residues) spans 33–61; the sequence is KTSETKEVKVDKPSDDKQDQIQKEKKESR. Positions 33–70 are disordered; it reads KTSETKEVKVDKPSDDKQDQIQKEKKESRTTIPSKGTK. The next 4 helical transmembrane spans lie at 413-433, 484-504, 532-552, and 571-591; these read FTIPNYGWSIIIFAILFKLVF, VGGCLPMVIQIPIFIALYTAF, AIPYFTQTGIGLNLLALLMVG, and MLMYVMPVMMLYIFWNMPSGV.

The protein belongs to the OXA1/ALB3/YidC family. Type 1 subfamily. In terms of assembly, interacts with the Sec translocase complex via SecD. Specifically interacts with transmembrane segments of nascent integral membrane proteins during membrane integration.

It is found in the cell inner membrane. Its function is as follows. Required for the insertion and/or proper folding and/or complex formation of integral membrane proteins into the membrane. Involved in integration of membrane proteins that insert both dependently and independently of the Sec translocase complex, as well as at least some lipoproteins. Aids folding of multispanning membrane proteins. The protein is Membrane protein insertase YidC of Leptospira borgpetersenii serovar Hardjo-bovis (strain JB197).